A 1070-amino-acid polypeptide reads, in one-letter code: MLGSGNEEMSTLPGLNQIQLEGFCRFIDRGLTEGLFKFPKIEDTDQEIEFQLFAETYQLLEPLINEKDAVYESLTYSAELYVSTGLIWKSSRDIKKQTIFVGNIPLMNSLGTSIVNGIYRIVINQILQSPGIYYRSELDPNGISVYTGTIISDWGGRLELEIDKKARIWARVSRKQKISILILLSAMGSNLSEILENVCYPEIFVSFLNDKDKKKIGSKENAILEFYRQFACVGGDPVFSESLWKELQKKFFQQRCELGRIGRRNMNQKLNLDIPQNNTFLLPRDILTAASHLIGMKFGMALLDDINHLKNKRIRSVADLLQDQFGLALVRLENMVRGTICGAIRHKLIPTPQNLVTSTPLTTTYESFFGLHPLSQVLDQTNPLTEIVHGRKLSYLGPGGLTGRTASFRIRDIHPSHYGRICPIDTSEGINVGLIGSLAIHARIGIWGAIESPFFEISERSKRIRMLYLSPSIDEYYMVATGNSLALTRDIQEEQIVPARYRQEFLTIAWEQVHLRSIYPFQYFSIGASLIPFIEHNDANRALMSSNMQRQAVPLSQSEKCIVGTGLECQVALDSGVSAIADHEGNIVYTDTDRIFLFVNGDTLSIPLTIYQRSNKNTCMHQKPQVHRGKFIKKGQILADGAATVGGELALGKNVLVAYMPWEGYNSEDAVLISERLVYEDIFTSFHIRKYEIQTHMTSYGSERITNKIPHLEANLLRNLDKNGIVILGSWVETGDVLVGKLTPQMAKESSYSPEDRLLRAILGIQVSTSKETCLKLPIGGRGRVIDVRWIQKKGGSSYNPETIRISILQKREIKVGDKVAGRHGNKGIVSKILSRQDMPYLQDGEPVDMVFNPLGVPSRMNVGQIFECSLGLSGGMLDKHYRITPFDERYEQEASRKLVFSELYEASKKTSNPWIFEPEYPGKSKIFDGRTGNSFKQPAIMGKTYILKLIHQVDDKIHGRSSGHYALVTQQPLRGRAKQGGQRVGEMEVWALEGFGVAHILQEMLTYKSDHIKTRQEVLGTTIIGGTIPKPTDAPESFRLLVRELRSLAMELNHFLVSEKNFRIHRKEA.

The protein belongs to the RNA polymerase beta chain family. As to quaternary structure, in plastids the minimal PEP RNA polymerase catalytic core is composed of four subunits: alpha, beta, beta', and beta''. When a (nuclear-encoded) sigma factor is associated with the core the holoenzyme is formed, which can initiate transcription.

The protein resides in the plastid. It localises to the chloroplast. It catalyses the reaction RNA(n) + a ribonucleoside 5'-triphosphate = RNA(n+1) + diphosphate. DNA-dependent RNA polymerase catalyzes the transcription of DNA into RNA using the four ribonucleoside triphosphates as substrates. The chain is DNA-directed RNA polymerase subunit beta from Phaseolus vulgaris (Kidney bean).